Here is a 453-residue protein sequence, read N- to C-terminus: Mitochondrial import inner membrane translocase subunit TIM44 (453 aa).

Residue Thr-129 is modified to Phosphothreonine. 167–174 (GGEKLGKT) contributes to the ATP binding site. At Lys-178 the chain carries N6-succinyllysine. Phosphoserine is present on Ser-181. Position 218 is an N6-succinyllysine (Lys-218).

It belongs to the Tim44 family. In terms of assembly, probable component of the PAM complex at least composed of a mitochondrial HSP70 protein, GRPEL1 or GRPEL2, TIMM44, TIMM16/PAM16 and TIMM14/DNAJC19. The complex interacts with the TIMM23 component of the TIM23 complex. Interacts with SLC25A4/ANT1 and SLC25A5/ANT2; leading to inhibit the presequence translocase TIMM23, thereby promoting stabilization of PINK1.

The protein resides in the mitochondrion inner membrane. Its subcellular location is the mitochondrion matrix. Its function is as follows. Essential component of the PAM complex, a complex required for the translocation of transit peptide-containing proteins from the inner membrane into the mitochondrial matrix in an ATP-dependent manner. Recruits mitochondrial HSP70 to drive protein translocation into the matrix using ATP as an energy source. This Rattus norvegicus (Rat) protein is Mitochondrial import inner membrane translocase subunit TIM44 (Timm44).